Reading from the N-terminus, the 215-residue chain is Ran-specific GTPase-activating protein 1 (215 aa).

Basic and acidic residues-rich tracts occupy residues 1–18 (MSAEQEKKTQGTTKEEQK) and 26–35 (VASKQTEEAK). The segment at 1–78 (MSAEQEKKTQ…ASPEVHFEPI (78 aa)) is disordered. A Phosphoserine modification is found at serine 70. Residues 74–210 (HFEPIVKLSA…FEKYQEENAK (137 aa)) enclose the RanBD1 domain.

It belongs to the RANBP1 family.

Its subcellular location is the cytoplasm. Stimulates the GTPase activity in the presence of RNA1. May potentiate the action of RanGAP1 (RNA1), thus playing the role of a negative regulator. In Schizosaccharomyces pombe (strain 972 / ATCC 24843) (Fission yeast), this protein is Ran-specific GTPase-activating protein 1 (sbp1).